Here is a 146-residue protein sequence, read N- to C-terminus: MRNEMHLQFSARSENESFARVTVAAFVAQLDPTMDELTEIKTVVSEAVTNAIIHGYNNDPNGIVSISVIIEDGVVHLTVRDEGVGIPDIEEARQPLFTTKPELERSGMGFTIMENFMDEVIVESEVNKGTTVYLKKHIAKSKALCN.

Belongs to the anti-sigma-factor family.

It catalyses the reaction L-seryl-[protein] + ATP = O-phospho-L-seryl-[protein] + ADP + H(+). It carries out the reaction L-threonyl-[protein] + ATP = O-phospho-L-threonyl-[protein] + ADP + H(+). Its function is as follows. Binds to sigma F and blocks its ability to form an RNA polymerase holoenzyme (E-sigma F). Phosphorylates SpoIIAA on a serine residue. This phosphorylation may enable SpoIIAA to act as an anti-anti-sigma factor that counteracts SpoIIAB and thus releases sigma F from inhibition. This is Anti-sigma F factor from Geobacillus kaustophilus (strain HTA426).